The chain runs to 213 residues: ATP-dependent Clp protease proteolytic subunit (213 aa).

Residue serine 114 is the Nucleophile of the active site. Residue histidine 139 is part of the active site.

The protein belongs to the peptidase S14 family. As to quaternary structure, fourteen ClpP subunits assemble into 2 heptameric rings which stack back to back to give a disk-like structure with a central cavity, resembling the structure of eukaryotic proteasomes.

It is found in the cytoplasm. It catalyses the reaction Hydrolysis of proteins to small peptides in the presence of ATP and magnesium. alpha-casein is the usual test substrate. In the absence of ATP, only oligopeptides shorter than five residues are hydrolyzed (such as succinyl-Leu-Tyr-|-NHMec, and Leu-Tyr-Leu-|-Tyr-Trp, in which cleavage of the -Tyr-|-Leu- and -Tyr-|-Trp bonds also occurs).. Cleaves peptides in various proteins in a process that requires ATP hydrolysis. Has a chymotrypsin-like activity. Plays a major role in the degradation of misfolded proteins. The polypeptide is ATP-dependent Clp protease proteolytic subunit (Methylobacillus flagellatus (strain ATCC 51484 / DSM 6875 / VKM B-1610 / KT)).